Here is a 177-residue protein sequence, read N- to C-terminus: Coatomer subunit zeta-1 (177 aa).

Belongs to the adaptor complexes small subunit family. In terms of assembly, oligomeric complex that consists of at least the alpha, beta, beta', gamma, delta, epsilon and zeta subunits.

The protein localises to the cytoplasm. Its subcellular location is the golgi apparatus membrane. It localises to the cytoplasmic vesicle. The protein resides in the COPI-coated vesicle membrane. Functionally, the coatomer is a cytosolic protein complex that binds to dilysine motifs and reversibly associates with Golgi non-clathrin-coated vesicles, which further mediate biosynthetic protein transport from the ER, via the Golgi up to the trans Golgi network. Coatomer complex is required for budding from Golgi membranes, and is essential for the retrograde Golgi-to-ER transport of dilysine-tagged proteins. The zeta subunit may be involved in regulating the coat assembly and, hence, the rate of biosynthetic protein transport due to its association-dissociation properties with the coatomer complex. This is Coatomer subunit zeta-1 from Arabidopsis thaliana (Mouse-ear cress).